We begin with the raw amino-acid sequence, 290 residues long: Protease HtpX (290 aa).

2 helical membrane-spanning segments follow: residues 4–24 (IFLF…TLKL) and 36–56 (GSLL…SLFI). Histidine 142 is a Zn(2+) binding site. Residue glutamate 143 is part of the active site. Histidine 146 provides a ligand contact to Zn(2+). 2 helical membrane-spanning segments follow: residues 150-170 (GDMV…MFFA) and 193-213 (FVAT…IVMW). Glutamate 219 lines the Zn(2+) pocket.

The protein belongs to the peptidase M48B family. Zn(2+) is required as a cofactor.

The protein resides in the cell inner membrane. This is Protease HtpX from Stutzerimonas stutzeri (strain A1501) (Pseudomonas stutzeri).